The following is a 1203-amino-acid chain: Metabotropic glutamate receptor 5 (1203 aa).

The signal sequence occupies residues methionine 1–alanine 20. At glutamine 21–proline 579 the chain is on the extracellular side. Cysteine 57 and cysteine 99 are oxidised to a cystine. An L-glutamate-binding site is contributed by tyrosine 64. An N-linked (GlcNAc...) asparagine glycan is attached at asparagine 88. Residues serine 151 and serine 172–threonine 174 each bind L-glutamate. Asparagine 209 carries an N-linked (GlcNAc...) asparagine glycan. L-glutamate is bound at residue tyrosine 222. 8 disulfides stabilise this stretch: cysteine 240/cysteine 529, cysteine 275/cysteine 277, cysteine 364/cysteine 380, cysteine 418/cysteine 425, cysteine 510/cysteine 530, cysteine 514/cysteine 533, cysteine 536/cysteine 548, and cysteine 551/cysteine 564. Aspartate 304 serves as a coordination point for L-glutamate. Residues asparagine 377 and asparagine 381 are each glycosylated (N-linked (GlcNAc...) asparagine). Position 395 (lysine 395) interacts with L-glutamate. Asparagine 444 is a glycosylation site (N-linked (GlcNAc...) asparagine). A helical membrane pass occupies residues isoleucine 580–isoleucine 602. Residues tyrosine 603–serine 612 are Cytoplasmic-facing. Residues serine 613–isoleucine 635 form a helical membrane-spanning segment. Residues alanine 636 to cysteine 643 lie on the Extracellular side of the membrane. An intrachain disulfide couples cysteine 643 to cysteine 732. A helical membrane pass occupies residues tyrosine 644 to asparagine 666. Topologically, residues arginine 667 to glutamine 692 are cytoplasmic. Residues leucine 693–methionine 713 form a helical membrane-spanning segment. The Extracellular portion of the chain corresponds to glutamate 714–asparagine 736. Residue asparagine 733 is glycosylated (N-linked (GlcNAc...) asparagine). The helical transmembrane segment at leucine 737–phenylalanine 758 threads the bilayer. The Cytoplasmic segment spans residues lysine 759–lysine 771. A helical transmembrane segment spans residues tyrosine 772–serine 794. At asparagine 795–lysine 797 the chain is on the extracellular side. The chain crosses the membrane as a helical span at residues isoleucine 798–proline 819. Topologically, residues lysine 820–leucine 1203 are cytoplasmic. A Phosphoserine modification is found at serine 860. An Omega-N-methylarginine modification is found at arginine 868. Disordered stretches follow at residues phenylalanine 892–proline 970, glutamate 1003–methionine 1054, and glycine 1122–isoleucine 1182. The span at threonine 905–glutamate 920 shows a compositional bias: polar residues. Arginine 924 carries the post-translational modification Omega-N-methylarginine. The segment covering proline 1007–proline 1017 has biased composition (low complexity). Phosphoserine is present on residues serine 1014 and serine 1016. 2 stretches are compositionally biased toward polar residues: residues histidine 1039 to methionine 1054 and aspartate 1165 to serine 1176.

It belongs to the G-protein coupled receptor 3 family. Interacts with RYR1, RYR2, ITPR1, SHANK1 and SHANK3. The PPXXF motif binds HOMER1, HOMER2 and HOMER3. Interacts with SIAH1 and TAMALIN. Interacts with NCDN. Interacts with NECAB2. Interacts with CAMK2A. As to expression, widely distributed in neuronal cells of the central nervous system.

It localises to the cell membrane. Functionally, G-protein coupled receptor for glutamate. Ligand binding causes a conformation change that triggers signaling via guanine nucleotide-binding proteins (G proteins) and modulates the activity of down-stream effectors. Signaling activates a phosphatidylinositol-calcium second messenger system and generates a calcium-activated chloride current. Plays an important role in the regulation of synaptic plasticity and the modulation of the neural network activity. This Rattus norvegicus (Rat) protein is Metabotropic glutamate receptor 5 (Grm5).